The following is a 246-amino-acid chain: ABC transporter ATP-binding protein NatA (246 aa).

The ABC transporter domain occupies 2–237 (ITLTDCSRRF…ERSEDLNYIF (236 aa)). Residue 38–45 (GENGAGKT) participates in ATP binding.

Belongs to the ABC transporter superfamily. The complex is composed of NatA and NatB.

It carries out the reaction Na(+)(in) + ATP + H2O = Na(+)(out) + ADP + phosphate + H(+). Its function is as follows. Part of an ABC transporter that catalyzes ATP-dependent electrogenic sodium extrusion. The protein is ABC transporter ATP-binding protein NatA of Bacillus subtilis (strain 168).